Reading from the N-terminus, the 674-residue chain is ATP-dependent DNA helicase Rep (674 aa).

One can recognise a UvrD-like helicase ATP-binding domain in the interval 1–280 (MRLNPGQQHA…IKLEQNYRSS (280 aa)). Residues 22–29 (AGAGSGKT) and R278 each bind ATP. Residues 281 to 562 (GRILKAANIL…QLMTLHASKG (282 aa)) enclose the UvrD-like helicase C-terminal domain.

It belongs to the helicase family. UvrD subfamily. Homodimer.

The catalysed reaction is Couples ATP hydrolysis with the unwinding of duplex DNA by translocating in the 3'-5' direction.. It catalyses the reaction ATP + H2O = ADP + phosphate + H(+). Functionally, rep helicase is a single-stranded DNA-dependent ATPase involved in DNA replication; it can initiate unwinding at a nick in the DNA. It binds to the single-stranded DNA and acts in a progressive fashion along the DNA in the 3' to 5' direction. The protein is ATP-dependent DNA helicase Rep of Salmonella typhimurium (strain LT2 / SGSC1412 / ATCC 700720).